The sequence spans 465 residues: tRNA (guanine(37)-N(1))-methyltransferase (465 aa).

S-adenosyl-L-methionine-binding positions include His-189, 227–228, and 255–256; these read DL and DA. The tract at residues 283–362 is disordered; that stretch reads YPKEGVPANE…GPGPPPSKPW (80 aa). Residues 291–320 are compositionally biased toward polar residues; the sequence is NENSSSNGNHNDVREGSQNGANESSVASTT. Over residues 343 to 352 the composition is skewed to basic residues; that stretch reads TKRRNNKRVR. Asn-371 serves as a coordination point for S-adenosyl-L-methionine.

The protein belongs to the class I-like SAM-binding methyltransferase superfamily. TRM5/TYW2 family. In terms of assembly, monomer.

It localises to the mitochondrion matrix. The protein localises to the nucleus. Its subcellular location is the cytoplasm. It catalyses the reaction guanosine(37) in tRNA + S-adenosyl-L-methionine = N(1)-methylguanosine(37) in tRNA + S-adenosyl-L-homocysteine + H(+). Functionally, specifically methylates the N1 position of guanosine-37 in various cytoplasmic and mitochondrial tRNAs. Methylation is not dependent on the nature of the nucleoside 5' of the target nucleoside. This is the first step in the biosynthesis of wybutosine (yW), a modified base adjacent to the anticodon of tRNAs and required for accurate decoding. This Sorghum bicolor (Sorghum) protein is tRNA (guanine(37)-N(1))-methyltransferase.